A 783-amino-acid chain; its full sequence is Glucosidase YgjK (783 aa).

The N-terminal stretch at 1-22 (MKIKTILTPVTCALLISFSAHA) is a signal peptide. The segment at 24 to 254 (NADNYKNVIN…TTLYTTYSHL (231 aa)) is N-terminal domain. Residues 254–299 (LLTAQEVSKEQMQIRDILARPAFYLTASQQRWEEYLKKGLTNPDAT) form a linker region. Positions 300–783 (PEQTRVAVKA…MLYNDFFRKQ (484 aa)) are a domain. The Ca(2+) site is built by Asp-454, Asn-456, Asn-458, Val-460, and Glu-462. The Proton donor role is filled by Asp-524. Glu-572 is a binding site for Ca(2+). Catalysis depends on Glu-750, which acts as the Proton acceptor.

The protein belongs to the glycosyl hydrolase 63 family.

Its function is as follows. Glucoside hydrolase that cleaves the alpha-1,3-glucosidic linkage in nigerose. Has very low activity towards maltooligosaccharides, soluble starch, nigerotriose, kojibiose and trehalose. This chain is Glucosidase YgjK (ygjK), found in Escherichia coli (strain K12).